We begin with the raw amino-acid sequence, 595 residues long: MTALLFLGSLLMSLDLTLSAPPWKSKEFKDGAGDPSVVLTVDGKLCHFPFQYHRRLYHKCIHKGQPGSRPWCATTPNFDEDQQWGYCLEPKKVKDHCSKHSPCHKGGTCVNTPNGPHCLCPEHLTGKHCQREKCFESQLLKFFHENEIWFRTGPGGVARCQCKGPQAVCKLLTSQVCRVNPCLNGGTCLLVEDHRLCHCPAGYAGPFCDLDLKATCYEDRGLSYRGQAKTTLSGAPCQRWASEATYRNMTETQALSWGLGHHAFCRNPDNDTRPWCYVWSGDRLSWDYCDLEQCQMPTLTSPVSPESHDMLKPRPPILQSSPRDSTRNQNVVSRTSTVVCGQRFRKRLSSLRRVVGGLVALPGSHPYIAALYWGDSFCAGSLIDPCWVLTAAHCLQKRPAPEELTVVLGQDRHNQSCERCQTLAVHSYRLHEGFSSKTYQHDLALLRLRGRKNSCAILSPHVQPVCLPSSAAPPSETVLCEVAGWGHQFEGAEEYATFLQEAQVPFISLDRCSSSNVHGDAILPGMLCAGFLEGGADACQGDSGGPLVCDEGVTERQLTLRGVISWGSGCGDRNKPGVYTDVANYLDWIQEHTAF.

The first 19 residues, 1 to 19 (MTALLFLGSLLMSLDLTLS), serve as a signal peptide directing secretion. A Fibronectin type-II domain is found at 41-89 (VDGKLCHFPFQYHRRLYHKCIHKGQPGSRPWCATTPNFDEDQQWGYCLE). Cystine bridges form between Cys-46-Cys-72, Cys-60-Cys-87, Cys-97-Cys-109, Cys-103-Cys-118, Cys-120-Cys-129, Cys-134-Cys-162, Cys-160-Cys-169, Cys-177-Cys-188, Cys-182-Cys-197, Cys-199-Cys-208, Cys-216-Cys-294, Cys-237-Cys-276, and Cys-265-Cys-289. In terms of domain architecture, EGF-like 1 spans 93–130 (VKDHCSKHSPCHKGGTCVNTPNGPHCLCPEHLTGKHCQ). An O-linked (Fuc) threonine glycan is attached at Thr-108. One can recognise a Fibronectin type-I domain in the interval 132–172 (EKCFESQLLKFFHENEIWFRTGPGGVARCQCKGPQAVCKLL). The 37-residue stretch at 173-209 (TSQVCRVNPCLNGGTCLLVEDHRLCHCPAGYAGPFCD) folds into the EGF-like 2 domain. The 80-residue stretch at 215 to 294 (TCYEDRGLSY…SWDYCDLEQC (80 aa)) folds into the Kringle domain. N-linked (GlcNAc...) asparagine glycosylation is present at Asn-248. O-linked (GalNAc...) threonine glycosylation occurs at Thr-298. A disordered region spans residues 302–332 (PVSPESHDMLKPRPPILQSSPRDSTRNQNVV). The O-linked (GalNAc...) serine glycan is linked to Ser-307. Positions 318–332 (LQSSPRDSTRNQNVV) are enriched in polar residues. O-linked (GalNAc...) threonine glycosylation occurs at Thr-326. Disulfide bonds link Cys-340–Cys-466, Cys-378–Cys-394, Cys-386–Cys-455, Cys-417–Cys-420, Cys-480–Cys-549, Cys-512–Cys-528, and Cys-539–Cys-570. One can recognise a Peptidase S1 domain in the interval 354–594 (VVGGLVALPG…YLDWIQEHTA (241 aa)). Residue His-393 is the Charge relay system of the active site. A glycan (N-linked (GlcNAc...) asparagine) is linked at Asn-414. Catalysis depends on Asp-442, which acts as the Charge relay system. The Charge relay system role is filled by Ser-543.

Belongs to the peptidase S1 family. As to quaternary structure, interacts with HRG; the interaction, which is enhanced in the presence of zinc ions and inhibited by heparin-binding, inhibits factor XII autoactivation and contact-initiated coagulation. O- and N-glycosylated.

It is found in the secreted. The catalysed reaction is Selective cleavage of Arg-|-Ile bonds in factor VII to form factor VIIa and factor XI to form factor XIa.. Its activity is regulated as follows. Activity is promoted in the presence of negatively charged surfaces. Its function is as follows. Factor XII is a serum glycoprotein that participates in the initiation of blood coagulation, fibrinolysis, and the generation of bradykinin and angiotensin. Prekallikrein is cleaved by factor XII to form kallikrein, which then cleaves factor XII first to alpha-factor XIIa and then trypsin cleaves it to beta-factor XIIa. Alpha-factor XIIa activates factor XI to factor XIa. The protein is Coagulation factor XII (F12) of Rattus norvegicus (Rat).